Consider the following 231-residue polypeptide: Aquaporin Z (231 aa).

Helical transmembrane passes span 11–31 (FLGT…AAAF) and 36–56 (IGLL…AFAI). Residues 65-67 (NPA) carry the NPA 1 motif. 3 helical membrane passes run 84–104 (LPYI…LYLI), 132–152 (MISV…VILG), and 161–181 (GFAP…SIPI). The NPA 2 signature appears at 187–189 (NPA). The helical transmembrane segment at 203-223 (VSQLWLFWAAPIIGAILAGVI) threads the bilayer.

The protein belongs to the MIP/aquaporin (TC 1.A.8) family. In terms of assembly, homotetramer.

It is found in the cell inner membrane. It catalyses the reaction H2O(in) = H2O(out). Its function is as follows. Channel that permits osmotically driven movement of water in both directions. It is involved in the osmoregulation and in the maintenance of cell turgor during volume expansion in rapidly growing cells. It mediates rapid entry or exit of water in response to abrupt changes in osmolarity. The sequence is that of Aquaporin Z from Shewanella oneidensis (strain ATCC 700550 / JCM 31522 / CIP 106686 / LMG 19005 / NCIMB 14063 / MR-1).